The following is a 517-amino-acid chain: Bifunctional purine biosynthesis protein PurH (517 aa).

In terms of domain architecture, MGS-like spans 1 to 145 (MSPLALVSVS…KNHADVAVLV (145 aa)).

This sequence belongs to the PurH family.

The catalysed reaction is (6R)-10-formyltetrahydrofolate + 5-amino-1-(5-phospho-beta-D-ribosyl)imidazole-4-carboxamide = 5-formamido-1-(5-phospho-D-ribosyl)imidazole-4-carboxamide + (6S)-5,6,7,8-tetrahydrofolate. The enzyme catalyses IMP + H2O = 5-formamido-1-(5-phospho-D-ribosyl)imidazole-4-carboxamide. It functions in the pathway purine metabolism; IMP biosynthesis via de novo pathway; 5-formamido-1-(5-phospho-D-ribosyl)imidazole-4-carboxamide from 5-amino-1-(5-phospho-D-ribosyl)imidazole-4-carboxamide (10-formyl THF route): step 1/1. It participates in purine metabolism; IMP biosynthesis via de novo pathway; IMP from 5-formamido-1-(5-phospho-D-ribosyl)imidazole-4-carboxamide: step 1/1. The polypeptide is Bifunctional purine biosynthesis protein PurH (Prochlorococcus marinus (strain MIT 9515)).